The chain runs to 171 residues: Adenine phosphoribosyltransferase (171 aa).

This sequence belongs to the purine/pyrimidine phosphoribosyltransferase family. In terms of assembly, homodimer.

Its subcellular location is the cytoplasm. It carries out the reaction AMP + diphosphate = 5-phospho-alpha-D-ribose 1-diphosphate + adenine. Its pathway is purine metabolism; AMP biosynthesis via salvage pathway; AMP from adenine: step 1/1. Functionally, catalyzes a salvage reaction resulting in the formation of AMP, that is energically less costly than de novo synthesis. This chain is Adenine phosphoribosyltransferase, found in Geobacter metallireducens (strain ATCC 53774 / DSM 7210 / GS-15).